We begin with the raw amino-acid sequence, 145 residues long: Large ribosomal subunit protein bL17 (145 aa).

The protein belongs to the bacterial ribosomal protein bL17 family. In terms of assembly, part of the 50S ribosomal subunit. Contacts protein L32.

This Orientia tsutsugamushi (strain Ikeda) (Rickettsia tsutsugamushi) protein is Large ribosomal subunit protein bL17.